We begin with the raw amino-acid sequence, 930 residues long: Translation initiation factor IF-2 (930 aa).

Residues 50 to 67 are compositionally biased toward low complexity; that stretch reads FKPAAAPKVEAKPAAPKV. Disordered stretches follow at residues 50–196 and 260–346; these read FKPA…RIDF and EVVP…HELP. 2 stretches are compositionally biased toward basic and acidic residues: residues 68–90 and 110–125; these read SAEK…EAKP and FKAE…AERR. Positions 129-141 are enriched in low complexity; that stretch reads KGNNRDQQQNGNR. Composition is skewed to basic and acidic residues over residues 157–172 and 262–295; these read RDNR…EQGQ and VPEK…DGPR. Residues 309 to 318 show a composition bias toward low complexity; the sequence is NQKNSNWNNN. A compositionally biased stretch (basic and acidic residues) spans 337-346; the sequence is VTERKFHELP. Positions 432-599 constitute a tr-type G domain; the sequence is ERPPVVTIMG…TVLLVAEIQE (168 aa). Positions 441 to 448 are G1; it reads GHVDHGKT. 441–448 contacts GTP; it reads GHVDHGKT. Positions 466–470 are G2; sequence GITQH. The segment at 487 to 490 is G3; that stretch reads DTPG. GTP contacts are provided by residues 487–491 and 541–544; these read DTPGH and NKID. Residues 541 to 544 are G4; sequence NKID. Positions 577-579 are G5; it reads SAK.

Belongs to the TRAFAC class translation factor GTPase superfamily. Classic translation factor GTPase family. IF-2 subfamily.

The protein localises to the cytoplasm. In terms of biological role, one of the essential components for the initiation of protein synthesis. Protects formylmethionyl-tRNA from spontaneous hydrolysis and promotes its binding to the 30S ribosomal subunits. Also involved in the hydrolysis of GTP during the formation of the 70S ribosomal complex. This chain is Translation initiation factor IF-2, found in Streptococcus pneumoniae serotype 19F (strain G54).